The sequence spans 273 residues: NAD-dependent protein deacylase (273 aa).

The region spanning 20–272 (RERLRQRIFF…PEFVEKLLEG (253 aa)) is the Deacetylase sirtuin-type domain. An NAD(+)-binding site is contributed by 48 to 67 (GAGISAESGIRTFRAADGLW). Residues Tyr-92 and Arg-95 each coordinate substrate. 129–132 (QNID) contacts NAD(+). Residue His-147 is the Proton acceptor of the active site. Cys-155 and Cys-174 together coordinate Zn(2+). Residues 214 to 216 (GTS), 240 to 242 (NLE), and Ala-258 each bind NAD(+).

Belongs to the sirtuin family. Class III subfamily. The cofactor is Zn(2+).

The protein resides in the cytoplasm. It carries out the reaction N(6)-acetyl-L-lysyl-[protein] + NAD(+) + H2O = 2''-O-acetyl-ADP-D-ribose + nicotinamide + L-lysyl-[protein]. The enzyme catalyses N(6)-succinyl-L-lysyl-[protein] + NAD(+) + H2O = 2''-O-succinyl-ADP-D-ribose + nicotinamide + L-lysyl-[protein]. The catalysed reaction is N(6)-(2-hydroxyisobutanoyl)-L-lysyl-[protein] + NAD(+) + H2O = 2''-O-(2-hydroxyisobutanoyl)-ADP-D-ribose + nicotinamide + L-lysyl-[protein]. In terms of biological role, NAD-dependent lysine deacetylase that specifically removes acetyl groups on target proteins. Also acts as a protein-lysine deacylase by mediating protein desuccinylation and de-2-hydroxyisobutyrylation. Modulates the activities of several proteins which are inactive in their acylated form. This is NAD-dependent protein deacylase from Shigella flexneri.